Reading from the N-terminus, the 81-residue chain is Cell division protein ZapB (81 aa).

A coiled-coil region spans residues 6–80; that stretch reads EVFEKLEAKV…LQALLGRMEE (75 aa). Polar residues predominate over residues 38 to 47; it reads SLAQDVQSAQ. The tract at residues 38–67 is disordered; the sequence is SLAQDVQSAQHQREELERENNHLKEQQSGW. The span at 48-62 shows a compositional bias: basic and acidic residues; that stretch reads HQREELERENNHLKE.

Belongs to the ZapB family. As to quaternary structure, homodimer. The ends of the coiled-coil dimer bind to each other, forming polymers. Interacts with FtsZ.

The protein resides in the cytoplasm. Its function is as follows. Non-essential, abundant cell division factor that is required for proper Z-ring formation. It is recruited early to the divisome by direct interaction with FtsZ, stimulating Z-ring assembly and thereby promoting cell division earlier in the cell cycle. Its recruitment to the Z-ring requires functional FtsA or ZipA. This chain is Cell division protein ZapB, found in Citrobacter koseri (strain ATCC BAA-895 / CDC 4225-83 / SGSC4696).